We begin with the raw amino-acid sequence, 210 residues long: T-cell surface glycoprotein CD8 beta chain (210 aa).

An N-terminal signal peptide occupies residues 1-21 (MQPGLWLLLATQLAALRGSSV). Positions 22–132 (LQQAPGSVMV…ELTFGKGTRL (111 aa)) constitute an Ig-like V-type domain. Topologically, residues 22–170 (LQQAPGSVMV…VTQKGPSCGL (149 aa)) are extracellular. A disulfide bridge links cysteine 41 with cysteine 116. A glycan (N-linked (GlcNAc...) asparagine) is linked at asparagine 102. A disordered region spans residues 139-161 (PTNSQPTKKPTPRKKMCRPPSPV). The chain crosses the membrane as a helical span at residues 171–191 (LTLGLLVAGVLVLLVSLGVAI). Topologically, residues 192–210 (HLYRLKRRARLRLLKQFYK) are cytoplasmic.

In terms of assembly, forms disulfide-linked heterodimers with CD8A at the cell surface. Interacts with CD3D; this interaction couples TCR-CD3 with CD8. Interacts with LCK. Phosphorylated as a consequence of T-cell activation. Post-translationally, palmitoylated at the cytoplasmic tail and thereby targets the heterodimer CD8A/CD8B to lipid rafts unlike CD8A homodimers.

The protein resides in the cell membrane. Its function is as follows. Integral membrane glycoprotein that plays an essential role in the immune response and serves multiple functions in responses against both external and internal offenses. In T-cells, functions primarily as a coreceptor for MHC class I molecule:peptide complex. The antigens presented by class I peptides are derived from cytosolic proteins while class II derived from extracellular proteins. Interacts simultaneously with the T-cell receptor (TCR) and the MHC class I proteins presented by antigen presenting cells (APCs). In turn, recruits the Src kinase LCK to the vicinity of the TCR-CD3 complex. A palmitoylation site in the cytoplasmic tail of CD8B chain contributes to partitioning of CD8 into the plasma membrane lipid rafts where signaling proteins are enriched. Once LCK recruited, it initiates different intracellular signaling pathways by phosphorylating various substrates ultimately leading to lymphokine production, motility, adhesion and activation of cytotoxic T-lymphocytes (CTLs). Additionally, plays a critical role in thymic selection of CD8+ T-cells. The chain is T-cell surface glycoprotein CD8 beta chain (CD8B) from Felis catus (Cat).